The sequence spans 4144 residues: DNA-dependent protein kinase catalytic subunit (4144 aa).

Lysine 127 bears the N6-acetyllysine mark. Residues 298 to 333 form an HEAT 1 repeat; it reads DNYVSLFEVLSKWCSHTNVEMKKAAHSALESFLKQV. Phosphoserine is present on residues serine 521, serine 851, and serine 903. Residues 1014–1050 form an HEAT 2 repeat; it reads QDTVALLETILDGIVDPVDSTLRDFCGRCIREFLKWS. Serine 1075 bears the Phosphoserine mark. The residue at position 1219 (lysine 1219) is an N6-acetyllysine. Residues 1516-1551 are interaction with C1D; it reads LDPSCKRLASGLLELAFAFGGLCEHLVDLLLDTAVL. The tract at residues 1516–1551 is leucine-zipper; it reads LDPSCKRLASGLLELAFAFGGLCEHLVDLLLDTAVL. The stretch at 1736–1769 is one TPR 1 repeat; it reads PMKSEEFPVGTLRYSNYVDCMKKFLDALELSQSP. Lysine 1983 carries the N6-acetyllysine modification. The residue at position 2069 (serine 2069) is a Phosphoserine; by autocatalysis. The residue at position 2271 (lysine 2271) is an N6-acetyllysine. A KIP-binding region spans residues 2448–3228; it reads LDIIYKMMAK…DHSLSMDEER (781 aa). Residue threonine 2547 is modified to Phosphothreonine. Threonine 2621 bears the Phosphothreonine; by autocatalysis mark. Serine 2624 is subject to Phosphoserine; by autocatalysis. Phosphothreonine; by autocatalysis is present on residues threonine 2650 and threonine 2659. Residues 2697–2729 form a disordered region; the sequence is AQKRNEKSQRAPLKSVGPDFGEKKLGLPGDKVD. Residues 2716-2729 show a composition bias toward basic and acidic residues; it reads FGEKKLGLPGDKVD. Residues 2753–2781 form a may split the end of the DNA molecule, with the two strands separating around the region region; the sequence is EKLSLIYARKGIAEQKREKEIKSELKMKH. Serine 2805 carries the phosphoserine modification. TPR repeat units lie at residues 2903-2935, 2936-2964, and 2965-2998; these read PVGVRLLEEALLHLGPQEPPAKQFKGRMRVSPD, VVRWMELAKLYRSIGEYDILRGIFSSEIG, and TKQITQSAIFAEARSDYSEAAKQYNEALNKEEWV. Residues 2922-3555 form the FAT domain; that stretch reads PAKQFKGRMR…VYPFIISSES (634 aa). Serine 3221 is modified (phosphoserine). N6-acetyllysine is present on residues lysine 3257, lysine 3276, lysine 3654, and lysine 3658. The stretch at 3711 to 3748 is one TPR 5 repeat; it reads LRNELEIPGQYDGKGKPLPEYHARIAGFDERIKVMASI. The region spanning 3738–4069 is the PI3K/PI4K catalytic domain; that stretch reads FDERIKVMAS…IHYAKRKLAG (332 aa). The tract at residues 3744–3750 is G-loop; the sequence is VMASIRK. Residues serine 3747 and serine 3837 each carry the phosphoserine modification. Residues 3935–3943 form a catalytic loop region; it reads GIGDRHLNN. The tract at residues 3955–3980 is activation loop; the sequence is GIDFGHAFGSATQFLPVPELMPFRLT. The residue at position 4042 (serine 4042) is a Phosphoserine. Residues 4112-4144 form the FATC domain; sequence NGLSEEAQVKCLIDQATDPNILGRTWIGWEPWM.

Belongs to the PI3/PI4-kinase family. As to quaternary structure, DNA-PK is a heterotrimer of PRKDC and the Ku dimer (composed of XRCC6/Ku70 and XRCC5/Ku86). Formation of this complex may be promoted by interaction with ILF3. Component of the core long-range non-homologous end joining (NHEJ) complex (also named DNA-PK complex) composed of PRKDC, LIG4, XRCC4, XRCC6/Ku70, XRCC5/Ku86 and NHEJ1/XLF. Additional component of the NHEJ complex includes PAXX. Following autophosphorylation, PRKDC dissociates from DNA. Interacts with DNA-PKcs-interacting protein (KIP) with the region upstream the kinase domain. PRKDC alone also interacts with and phosphorylates DCLRE1C, thereby activating the latent endonuclease activity of this protein. Interacts with C1D. Interacts with TTI1 and TELO2. Interacts with CIB1. Interacts with SETX. Interacts with NR4A3; the DNA-dependent protein kinase complex DNA-PK phosphorylates and activates NR4A3 and prevents NR4A3 ubiquitination and degradation. Interacts with BRAT1. Part of the HDP-RNP complex composed of at least HEXIM1, PRKDC, XRCC5, XRCC6, paraspeckle proteins (SFPQ, NONO, PSPC1, RBM14, and MATR3) and NEAT1 RNA. Interacts with KAT5. Autophosphorylated at two clusters, the T2609 cluster and the S2056 cluster. Autophosphorylated on Ser-2069, Thr-2621, Thr-2650 and Thr-2659. Ser-2069 and Thr-2621 are DNA damage-inducible phosphorylation sites (inducible with ionizing radiation, IR) dephosphorylated by PPP5C. Autophosphorylation induces a conformational change that leads to remodeling of the DNA-PK complex, requisite for efficient end processing and DNA repair. Autophosphorylation in trans within DNA-PK complexes loaded on DNA ends leads to the dissociation of PRKDC from DNA and the transition into the short-range NHEJ complex. Autophosphorylation of the T2609 cluster is required for hematopoietic development and protein synthesis in erythrocytes precursors. In terms of processing, S-nitrosylated by GAPDH. Post-translationally, polyubiquitinated by RNF144A, leading to proteasomal degradation.

The protein resides in the nucleus. The protein localises to the nucleolus. Its subcellular location is the cytoplasm. It is found in the cytosol. It catalyses the reaction L-seryl-[protein] + ATP = O-phospho-L-seryl-[protein] + ADP + H(+). The catalysed reaction is L-threonyl-[protein] + ATP = O-phospho-L-threonyl-[protein] + ADP + H(+). Its activity is regulated as follows. Activity seems to be attenuated by autophosphorylation. Binding to the SL1 region of U3 small nucleolar RNA promotes auto-phosphorylation activity. Inhibited by wortmannin. In terms of biological role, serine/threonine-protein kinase that acts as a molecular sensor for DNA damage. Involved in DNA non-homologous end joining (NHEJ) required for double-strand break (DSB) repair and V(D)J recombination. Must be bound to DNA to express its catalytic properties. Promotes processing of hairpin DNA structures in V(D)J recombination by activation of the hairpin endonuclease artemis (DCLRE1C). Recruited by XRCC5 and XRCC6 to DNA ends and is required to (1) protect and align broken ends of DNA, thereby preventing their degradation, (2) and sequester the DSB for repair by NHEJ. Acts as a scaffold protein to aid the localization of DNA repair proteins to the site of damage. The assembly of the DNA-PK complex at DNA ends is also required for the NHEJ ligation step. Found at the ends of chromosomes, suggesting a further role in the maintenance of telomeric stability and the prevention of chromosomal end fusion. Also involved in modulation of transcription. As part of the DNA-PK complex, involved in the early steps of ribosome assembly by promoting the processing of precursor rRNA into mature 18S rRNA in the small-subunit processome. Binding to U3 small nucleolar RNA, recruits PRKDC and XRCC5/Ku86 to the small-subunit processome. Recognizes the substrate consensus sequence [ST]-Q. Phosphorylates 'Ser-139' of histone variant H2AX, thereby regulating DNA damage response mechanism. Phosphorylates ASF1A, DCLRE1C, c-Abl/ABL1, histone H1, HSPCA, c-jun/JUN, p53/TP53, PARP1, POU2F1, DHX9, FH, SRF, NHEJ1/XLF, XRCC1, XRCC4, XRCC5, XRCC6, WRN, MYC and RFA2. Can phosphorylate C1D not only in the presence of linear DNA but also in the presence of supercoiled DNA. Ability to phosphorylate p53/TP53 in the presence of supercoiled DNA is dependent on C1D. Acts as a regulator of the phosphatidylinositol 3-kinase/protein kinase B signal transduction by mediating phosphorylation of 'Ser-473' of protein kinase B (PKB/AKT1, PKB/AKT2, PKB/AKT3), promoting their activation. Contributes to the determination of the circadian period length by antagonizing phosphorylation of CRY1 'Ser-588' and increasing CRY1 protein stability, most likely through an indirect mechanism. Plays a role in the regulation of DNA virus-mediated innate immune response by assembling into the HDP-RNP complex, a complex that serves as a platform for IRF3 phosphorylation and subsequent innate immune response activation through the cGAS-STING pathway. Also regulates the cGAS-STING pathway by catalyzing phosphorylation of CGAS, thereby impairing CGAS oligomerization and activation. Also regulates the cGAS-STING pathway by mediating phosphorylation of PARP1. This chain is DNA-dependent protein kinase catalytic subunit (PRKDC), found in Canis lupus familiaris (Dog).